The sequence spans 251 residues: Ubiquinone/menaquinone biosynthesis C-methyltransferase UbiE (251 aa).

Residues T74, D95, and 123–124 (NA) contribute to the S-adenosyl-L-methionine site.

It belongs to the class I-like SAM-binding methyltransferase superfamily. MenG/UbiE family.

The enzyme catalyses a 2-demethylmenaquinol + S-adenosyl-L-methionine = a menaquinol + S-adenosyl-L-homocysteine + H(+). The catalysed reaction is a 2-methoxy-6-(all-trans-polyprenyl)benzene-1,4-diol + S-adenosyl-L-methionine = a 5-methoxy-2-methyl-3-(all-trans-polyprenyl)benzene-1,4-diol + S-adenosyl-L-homocysteine + H(+). It participates in quinol/quinone metabolism; menaquinone biosynthesis; menaquinol from 1,4-dihydroxy-2-naphthoate: step 2/2. It functions in the pathway cofactor biosynthesis; ubiquinone biosynthesis. Methyltransferase required for the conversion of demethylmenaquinol (DMKH2) to menaquinol (MKH2) and the conversion of 2-polyprenyl-6-methoxy-1,4-benzoquinol (DDMQH2) to 2-polyprenyl-3-methyl-6-methoxy-1,4-benzoquinol (DMQH2). The polypeptide is Ubiquinone/menaquinone biosynthesis C-methyltransferase UbiE (Shewanella woodyi (strain ATCC 51908 / MS32)).